The following is a 493-amino-acid chain: Probable NADPH:adrenodoxin oxidoreductase, mitochondrial (493 aa).

Serine 26, glutamate 48, leucine 56, and isoleucine 100 together coordinate FAD. NADP(+)-binding positions include 177–180 (NGNV), 223–224 (RR), and glutamate 235. Residues tryptophan 407 and 414–416 (GVI) each bind FAD. An NADP(+)-binding site is contributed by glycine 414.

Belongs to the ferredoxin--NADP reductase type 1 family. The cofactor is FAD.

The protein resides in the mitochondrion inner membrane. The enzyme catalyses 2 reduced [adrenodoxin] + NADP(+) + H(+) = 2 oxidized [adrenodoxin] + NADPH. Its function is as follows. Adrenodoxin reductase transfers electrons from NADPH to adrenodoxin, which is involved in heme A biosynthesis and in iron-sulfur cluster assembly. Involved in the electron transfer to heme A synthase COX15, a heme protein that catalyzes the conversion of heme O to heme A. Required for the de novo synthesis of Fe-S clusters on iron sulfur cluster assembly protein ISU1. Involved in electron delivery for Fe-S cluster synthesis. Essential for coenzyme Q biosynthesis. May be involved in the electron transfer required for the hydroxylation reaction performed by COQ6. May play a role in cellular and mitochondrial iron homeostasis. This Saccharomyces cerevisiae (strain ATCC 204508 / S288c) (Baker's yeast) protein is Probable NADPH:adrenodoxin oxidoreductase, mitochondrial.